The chain runs to 128 residues: MSGRGKQGGKARAKAKTRSSRAGLQFPVGRVHRLLRKGNYSERVGAGAPVYLAAVLEYLTAEILELAGNAARDNKKTRIIPRHLQLAIRNDEELNKLLGRVTIAQGGVLPNIQAVLLPKKTESHHKAK.

Residues Met-1–Ala-22 form a disordered region. Residue Ser-2 is modified to N-acetylserine. Phosphoserine; by RPS6KA5 is present on Ser-2. Arg-4 carries the citrulline; alternate modification. The residue at position 4 (Arg-4) is a Symmetric dimethylarginine; by PRMT5; alternate. Lys-6 and Lys-10 each carry N6-(2-hydroxyisobutyryl)lysine; alternate. The residue at position 6 (Lys-6) is an N6-(beta-hydroxybutyryl)lysine; alternate. A compositionally biased stretch (basic residues) spans Gln-7–Ser-19. Residue Lys-10 is modified to N6-lactoyllysine; alternate. An N6-succinyllysine; alternate modification is found at Lys-10. Glycyl lysine isopeptide (Lys-Gly) (interchain with G-Cter in ubiquitin) cross-links involve residues Lys-14 and Lys-16. An N6-(2-hydroxyisobutyryl)lysine; alternate modification is found at Lys-37. Lys-37 bears the N6-(beta-hydroxybutyryl)lysine; alternate mark. Lys-37 carries the post-translational modification N6-crotonyllysine; alternate. N6-(2-hydroxyisobutyryl)lysine is present on residues Lys-75 and Lys-76. Lys-96 carries the N6-(2-hydroxyisobutyryl)lysine; alternate modification. Lys-96 carries the N6-succinyllysine; alternate modification. The residue at position 96 (Lys-96) is an N6-glutaryllysine; alternate. Residue Gln-105 is modified to N5-methylglutamine. The residue at position 119 (Lys-119) is an N6-(2-hydroxyisobutyryl)lysine; alternate. 2 positions are modified to N6-crotonyllysine; alternate: Lys-119 and Lys-120. N6-glutaryllysine; alternate is present on residues Lys-119 and Lys-120. Residue Lys-120 is modified to N6-(beta-hydroxybutyryl)lysine; alternate. Lys-120 is covalently cross-linked (Glycyl lysine isopeptide (Lys-Gly) (interchain with G-Cter in ubiquitin); alternate). Thr-121 is modified (phosphothreonine; by DCAF1). N6-(beta-hydroxybutyryl)lysine; alternate is present on Lys-126. N6-crotonyllysine; alternate is present on Lys-126. At Lys-126 the chain carries N6-glutaryllysine; alternate.

The protein belongs to the histone H2A family. As to quaternary structure, the nucleosome is a histone octamer containing two molecules each of H2A, H2B, H3 and H4 assembled in one H3-H4 heterotetramer and two H2A-H2B heterodimers. The octamer wraps approximately 147 bp of DNA. In terms of processing, deiminated on Arg-4 in granulocytes upon calcium entry. Post-translationally, monoubiquitination of Lys-120 (H2AK119Ub) by RING1, TRIM37 and RNF2/RING2 complex gives a specific tag for epigenetic transcriptional repression and participates in X chromosome inactivation of female mammals. It is involved in the initiation of both imprinted and random X inactivation. Ubiquitinated H2A is enriched in inactive X chromosome chromatin. Ubiquitination of H2A functions downstream of methylation of 'Lys-27' of histone H3 (H3K27me). H2AK119Ub by RNF2/RING2 can also be induced by ultraviolet and may be involved in DNA repair. Following DNA double-strand breaks (DSBs), it is ubiquitinated through 'Lys-63' linkage of ubiquitin moieties by the E2 ligase UBE2N and the E3 ligases RNF8 and RNF168, leading to the recruitment of repair proteins to sites of DNA damage. Ubiquitination at Lys-14 and Lys-16 (H2AK13Ub and H2AK15Ub, respectively) in response to DNA damage is initiated by RNF168 that mediates monoubiquitination at these 2 sites, and 'Lys-63'-linked ubiquitin are then conjugated to monoubiquitin; RNF8 is able to extend 'Lys-63'-linked ubiquitin chains in vitro. H2AK119Ub and ionizing radiation-induced 'Lys-63'-linked ubiquitination (H2AK13Ub and H2AK15Ub) are distinct events. Phosphorylation on Ser-2 (H2AS1ph) is enhanced during mitosis. Phosphorylation on Ser-2 by RPS6KA5/MSK1 directly represses transcription. Acetylation of H3 inhibits Ser-2 phosphorylation by RPS6KA5/MSK1. Phosphorylation at Thr-121 (H2AT120ph) by DCAF1 is present in the regulatory region of many tumor suppresor genes and down-regulates their transcription. In terms of processing, symmetric dimethylation on Arg-4 by the PRDM1/PRMT5 complex may play a crucial role in the germ-cell lineage. Post-translationally, glutamine methylation at Gln-105 (H2AQ104me) by FBL is specifically dedicated to polymerase I. It is present at 35S ribosomal DNA locus and impairs binding of the FACT complex. Crotonylation (Kcr) is specifically present in male germ cells and marks testis-specific genes in post-meiotic cells, including X-linked genes that escape sex chromosome inactivation in haploid cells. Crotonylation marks active promoters and enhancers and confers resistance to transcriptional repressors. It is also associated with post-meiotically activated genes on autosomes. In terms of processing, hydroxybutyrylation of histones is induced by starvation. Post-translationally, lactylated in macrophages by EP300/P300 by using lactoyl-CoA directly derived from endogenous or exogenous lactate, leading to stimulates gene transcription.

It localises to the nucleus. The protein resides in the chromosome. Its function is as follows. Core component of nucleosome. Nucleosomes wrap and compact DNA into chromatin, limiting DNA accessibility to the cellular machineries which require DNA as a template. Histones thereby play a central role in transcription regulation, DNA repair, DNA replication and chromosomal stability. DNA accessibility is regulated via a complex set of post-translational modifications of histones, also called histone code, and nucleosome remodeling. The protein is Histone H2A type 1-H of Mus musculus (Mouse).